The sequence spans 882 residues: Pyruvate dehydrogenase E1 component (882 aa).

As to quaternary structure, homodimer. Part of the PDH complex, consisting of multiple copies of pyruvate dehydrogenase (E1), dihydrolipoamide acetyltransferase (E2) and lipoamide dehydrogenase (E3). Requires thiamine diphosphate as cofactor.

It catalyses the reaction N(6)-[(R)-lipoyl]-L-lysyl-[protein] + pyruvate + H(+) = N(6)-[(R)-S(8)-acetyldihydrolipoyl]-L-lysyl-[protein] + CO2. In terms of biological role, component of the pyruvate dehydrogenase (PDH) complex, that catalyzes the overall conversion of pyruvate to acetyl-CoA and CO(2). The protein is Pyruvate dehydrogenase E1 component (aceE) of Pseudomonas aeruginosa (strain ATCC 15692 / DSM 22644 / CIP 104116 / JCM 14847 / LMG 12228 / 1C / PRS 101 / PAO1).